We begin with the raw amino-acid sequence, 158 residues long: 2-C-methyl-D-erythritol 2,4-cyclodiphosphate synthase (158 aa).

The a divalent metal cation site is built by D9 and H11. Residues 9-11 (DVH) and 35-36 (HS) each bind 4-CDP-2-C-methyl-D-erythritol 2-phosphate. H43 provides a ligand contact to a divalent metal cation. 4-CDP-2-C-methyl-D-erythritol 2-phosphate is bound by residues 57 to 59 (DIG), 62 to 66 (FPDTD), 101 to 107 (AQKPKMA), 133 to 136 (TTTE), F140, and R143.

This sequence belongs to the IspF family. As to quaternary structure, homotrimer. A divalent metal cation is required as a cofactor.

It carries out the reaction 4-CDP-2-C-methyl-D-erythritol 2-phosphate = 2-C-methyl-D-erythritol 2,4-cyclic diphosphate + CMP. It participates in isoprenoid biosynthesis; isopentenyl diphosphate biosynthesis via DXP pathway; isopentenyl diphosphate from 1-deoxy-D-xylulose 5-phosphate: step 4/6. In terms of biological role, involved in the biosynthesis of isopentenyl diphosphate (IPP) and dimethylallyl diphosphate (DMAPP), two major building blocks of isoprenoid compounds. Catalyzes the conversion of 4-diphosphocytidyl-2-C-methyl-D-erythritol 2-phosphate (CDP-ME2P) to 2-C-methyl-D-erythritol 2,4-cyclodiphosphate (ME-CPP) with a corresponding release of cytidine 5-monophosphate (CMP). The chain is 2-C-methyl-D-erythritol 2,4-cyclodiphosphate synthase from Geobacillus sp. (strain WCH70).